The sequence spans 144 residues: Small ribosomal subunit protein uS9 (144 aa).

Thr2 is modified (N-acetylthreonine). Positions 124–144 are disordered; the sequence is RRESKKFGGPGARARYQKSYR.

It belongs to the universal ribosomal protein uS9 family.

This is Small ribosomal subunit protein uS9 (rps-16) from Caenorhabditis elegans.